The chain runs to 115 residues: Aspartate 1-decarboxylase (115 aa).

Residue Ser25 is the Schiff-base intermediate with substrate; via pyruvic acid of the active site. Position 25 is a pyruvic acid (Ser) (Ser25). Thr57 lines the substrate pocket. Tyr58 functions as the Proton donor in the catalytic mechanism. Residue 71-73 (GAA) coordinates substrate.

The protein belongs to the PanD family. As to quaternary structure, heterooctamer of four alpha and four beta subunits. The cofactor is pyruvate. Is synthesized initially as an inactive proenzyme, which is activated by self-cleavage at a specific serine bond to produce a beta-subunit with a hydroxyl group at its C-terminus and an alpha-subunit with a pyruvoyl group at its N-terminus.

It is found in the cytoplasm. It carries out the reaction L-aspartate + H(+) = beta-alanine + CO2. The protein operates within cofactor biosynthesis; (R)-pantothenate biosynthesis; beta-alanine from L-aspartate: step 1/1. In terms of biological role, catalyzes the pyruvoyl-dependent decarboxylation of aspartate to produce beta-alanine. The chain is Aspartate 1-decarboxylase from Campylobacter concisus (strain 13826).